Reading from the N-terminus, the 87-residue chain is uncharacterized protein (87 aa).

The N-terminal stretch at 1 to 19 (MLVLLVAVLVTAVYAFVHA) is a signal peptide. Residues 39 to 59 (LVILGAAVALASILYPVLGVL) traverse the membrane as a helical segment.

To M.leprae ML2453.

Its subcellular location is the membrane. This is an uncharacterized protein from Mycobacterium bovis (strain ATCC BAA-935 / AF2122/97).